A 320-amino-acid chain; its full sequence is uncharacterized protein (320 aa).

Residues 22 to 86 (KTIGRSSSFD…IRDLNNKTGT (65 aa)) form the FHA domain. Residues 242 to 264 (TDTDTTEEKEEEEEKEEGDDEEG) form a disordered region.

This is an uncharacterized protein from Saccharomyces cerevisiae (strain ATCC 204508 / S288c) (Baker's yeast).